Reading from the N-terminus, the 69-residue chain is Fungal defensin oryzeasin (69 aa).

Positions 1 to 18 (MKLLTVAFSLLLLGQVHA) are cleaved as a signal peptide. The propeptide occupies 19–26 (SPLVLDKR). Disulfide bonds link Cys29–Cys60, Cys44–Cys66, and Cys48–Cys68.

This sequence belongs to the invertebrate defensin family.

It localises to the secreted. It is found in the target cell membrane. Functionally, shows antibacterial activity against numerous Gram-positive bacteria. It selectively inhibits peptidoglycan biosynthesis through complex formation with the cell wall precursor lipid II (1:1 molar ratio) thus inhibiting cell wall synthesis. This chain is Fungal defensin oryzeasin, found in Aspergillus oryzae (strain ATCC 42149 / RIB 40) (Yellow koji mold).